A 150-amino-acid chain; its full sequence is Spore germination protein GerT (150 aa).

Its subcellular location is the spore coat. In terms of biological role, involved in spore germination. This is Spore germination protein GerT (gerT) from Bacillus licheniformis (strain ATCC 14580 / DSM 13 / JCM 2505 / CCUG 7422 / NBRC 12200 / NCIMB 9375 / NCTC 10341 / NRRL NRS-1264 / Gibson 46).